Consider the following 347-residue polypeptide: L-threonine 3-dehydrogenase (347 aa).

A Zn(2+)-binding site is contributed by C42. Catalysis depends on charge relay system residues T44 and H47. Zn(2+) contacts are provided by H67, E68, C97, C100, C103, and C111. Residues I179, E199, R204, 266 to 268 (LGL), and 291 to 292 (IT) each bind NAD(+).

Belongs to the zinc-containing alcohol dehydrogenase family. Homotetramer. It depends on Zn(2+) as a cofactor.

It localises to the cytoplasm. It catalyses the reaction L-threonine + NAD(+) = (2S)-2-amino-3-oxobutanoate + NADH + H(+). The protein operates within amino-acid degradation; L-threonine degradation via oxydo-reductase pathway; glycine from L-threonine: step 1/2. Functionally, catalyzes the NAD(+)-dependent oxidation of L-threonine to 2-amino-3-ketobutyrate. In Caldanaerobacter subterraneus subsp. tengcongensis (strain DSM 15242 / JCM 11007 / NBRC 100824 / MB4) (Thermoanaerobacter tengcongensis), this protein is L-threonine 3-dehydrogenase.